A 165-amino-acid polypeptide reads, in one-letter code: Protein-export protein SecB (165 aa).

Belongs to the SecB family. In terms of assembly, homotetramer, a dimer of dimers. One homotetramer interacts with 1 SecA dimer.

Its subcellular location is the cytoplasm. Its function is as follows. One of the proteins required for the normal export of preproteins out of the cell cytoplasm. It is a molecular chaperone that binds to a subset of precursor proteins, maintaining them in a translocation-competent state. It also specifically binds to its receptor SecA. This Ruegeria pomeroyi (strain ATCC 700808 / DSM 15171 / DSS-3) (Silicibacter pomeroyi) protein is Protein-export protein SecB.